The sequence spans 468 residues: MSDIKKVVLAYSGGLDTSVILKWLQDVYKCEVVTFTADLGQGEELEPARAKALKAGIKPKNIYIDDVREEFVRDFVFPMFRANTVYEGEYLLGTSIARPLIAKRLIEIVNETGADAICHGATGKGNDQVRFELGAYALKPGIKVIAPWREWDLMSREKLMAYAEKHGIEIDMKHKKGGSPYSMDANLLHISYEGRHLEDPAAEAEESMWRWTVSPEKAPNKAEYLDLEFAKGDVVAVNGKKLKAHEVLALLNELGGKHGIGRLDLVENRYVGMKSRGCYETPGGTILLRAHRAIESVTLDREVAHLKDDLMPRYASLVYNGYWWSPERKALQVLIDHTQQTVNGVVRLKLYKGNVIVVGRDSKTDSLFDSTIATFEDDAGAYDQRDAGGFIKLNALRLRIAANLAGRKAGKPVAKKAAAKPVTKAVPKAVAKPVTKAVAKAAEKPVAAKATAKPVKAPVKKPIAKKKG.

ATP is bound by residues 10-18 (AYSGGLDTS) and Ala-37. Residues Tyr-90 and Ser-95 each coordinate L-citrulline. Gly-120 contacts ATP. Residues Thr-122, Asn-126, and Asp-127 each contribute to the L-aspartate site. Asn-126 contacts L-citrulline. L-citrulline is bound by residues Arg-130, Ser-182, Ser-191, Glu-267, and Tyr-279. Over residues 445–457 (PVAAKATAKPVKA) the composition is skewed to low complexity. Positions 445–468 (PVAAKATAKPVKAPVKKPIAKKKG) are disordered. Over residues 458 to 468 (PVKKPIAKKKG) the composition is skewed to basic residues.

The protein belongs to the argininosuccinate synthase family. Type 1 subfamily. In terms of assembly, homotetramer.

It is found in the cytoplasm. It carries out the reaction L-citrulline + L-aspartate + ATP = 2-(N(omega)-L-arginino)succinate + AMP + diphosphate + H(+). Its pathway is amino-acid biosynthesis; L-arginine biosynthesis; L-arginine from L-ornithine and carbamoyl phosphate: step 2/3. In Dechloromonas aromatica (strain RCB), this protein is Argininosuccinate synthase.